Reading from the N-terminus, the 378-residue chain is MTPPLSDKQTLPPKQTIVVKLGTSVLTGGTLKLDRAHMVELVRQCAYLRRYGHKVIIVTSGAIAAGREHLDYPELPKTMASKQLLAAVGQSRLIQEWESLFGIYGLHVGQMLLTRADLDDRERYLNARDMLIALLDNGIIPVVNENDAVATTEIKVGDNDNLSALVGILGGADKLLLLTDQPGLFTADPRNNPDAELIREVHTIDETLRKLAGGSAGGLGTGGMATKLQAADVARRAGIEVIIAAGSRPDVISDLASGESVGTRFLPLDTPLESRKRWILAGPPPAGDIVIDAGAAKAVLERGSSLLSKGISEVKGAFERGEVARIFDTNGVLLARGICRYSSRDMAMIVGKHSQEIYKVLGYEYGPVAIHRDDLVVI.

ATP is bound at residue lysine 20. Residues serine 60, aspartate 147, and asparagine 159 each contribute to the substrate site. Residues 179 to 180 and 221 to 227 each bind ATP; these read TD and TGGMATK. In terms of domain architecture, PUA spans 286 to 364; the sequence is AGDIVIDAGA…QEIYKVLGYE (79 aa).

The protein belongs to the glutamate 5-kinase family.

Its subcellular location is the cytoplasm. It carries out the reaction L-glutamate + ATP = L-glutamyl 5-phosphate + ADP. Its pathway is amino-acid biosynthesis; L-proline biosynthesis; L-glutamate 5-semialdehyde from L-glutamate: step 1/2. Functionally, catalyzes the transfer of a phosphate group to glutamate to form L-glutamate 5-phosphate. The protein is Glutamate 5-kinase of Photobacterium profundum (strain SS9).